The chain runs to 527 residues: Bacillolysin (527 aa).

Positions 1-28 (MKKSYLATSLTLSIAVGVSGFTSVPAFA) are cleaved as a signal peptide. Positions 29–223 (KTKIDYHKQW…VINKYNMLDH (195 aa)) are cleaved as a propeptide — activation peptide. Ca(2+) contacts are provided by D276, D278, and D354. H358 provides a ligand contact to Zn(2+). Residue E359 is part of the active site. Positions 362 and 382 each coordinate Zn(2+). Ca(2+) contacts are provided by D393, N394, D396, E401, Y404, T405, and D411. H442 acts as the Proton donor in catalysis.

The protein belongs to the peptidase M4 family. Requires Ca(2+) as cofactor. It depends on Zn(2+) as a cofactor.

It is found in the secreted. It carries out the reaction Similar, but not identical, to that of thermolysin.. Functionally, extracellular zinc metalloprotease. This is Bacillolysin (npr) from Brevibacillus brevis (Bacillus brevis).